Consider the following 91-residue polypeptide: Large ribosomal subunit protein bL27 (91 aa).

The protein belongs to the bacterial ribosomal protein bL27 family.

The sequence is that of Large ribosomal subunit protein bL27 from Deinococcus deserti (strain DSM 17065 / CIP 109153 / LMG 22923 / VCD115).